The primary structure comprises 199 residues: Stress response protein SCP2 (199 aa).

This sequence belongs to the CAPAB/TerDEXZ family.

It localises to the cytoplasm. The sequence is that of Stress response protein SCP2 (yceC) from Bacillus subtilis (strain 168).